The sequence spans 145 residues: MAEVEQKKKRTFKKFTYRGVDLDQLLDMSYEQVMQLYCARQRRRLNRGLRRKQNSLLKRLRKAKKEAPPMEKPEVIKTHLRDMIILPEMVGSMVGVYNGKAFNQVEIKPEMIGHYLGEFSITYKPVKHGRPGIGATHSSRFIPLK.

Belongs to the universal ribosomal protein uS19 family. As to quaternary structure, component of the small ribosomal subunit.

Its subcellular location is the cytoplasm. Component of the small ribosomal subunit. The ribosome is a large ribonucleoprotein complex responsible for the synthesis of proteins in the cell. In Xenopus laevis (African clawed frog), this protein is Small ribosomal subunit protein uS19 (rps15).